The chain runs to 54 residues: Large ribosomal subunit protein bL33 (54 aa).

This sequence belongs to the bacterial ribosomal protein bL33 family.

The protein is Large ribosomal subunit protein bL33 of Petrotoga mobilis (strain DSM 10674 / SJ95).